Here is a 232-residue protein sequence, read N- to C-terminus: Ribonuclease 3 (232 aa).

One can recognise an RNase III domain in the interval 6–133 (FNDIENRLGV…VIAAVYLDKG (128 aa)). Position 46 (Glu-46) interacts with Mg(2+). The active site involves Asp-50. The Mg(2+) site is built by Asp-119 and Glu-122. Residue Glu-122 is part of the active site. A DRBM domain is found at 160–229 (DFKTKLQELL…AKEALKRLEK (70 aa)).

This sequence belongs to the ribonuclease III family. In terms of assembly, homodimer. The cofactor is Mg(2+).

It is found in the cytoplasm. It carries out the reaction Endonucleolytic cleavage to 5'-phosphomonoester.. Functionally, digests double-stranded RNA. Involved in the processing of primary rRNA transcript to yield the immediate precursors to the large and small rRNAs (23S and 16S). Processes some mRNAs, and tRNAs when they are encoded in the rRNA operon. Processes pre-crRNA and tracrRNA of type II CRISPR loci if present in the organism. This is Ribonuclease 3 from Clostridium botulinum (strain Alaska E43 / Type E3).